A 306-amino-acid polypeptide reads, in one-letter code: tRNA dimethylallyltransferase (306 aa).

G11 to S18 serves as a coordination point for ATP. A substrate-binding site is contributed by T13–S18. An interaction with substrate tRNA region spans residues D35 to Q38.

This sequence belongs to the IPP transferase family. Monomer. Requires Mg(2+) as cofactor.

It carries out the reaction adenosine(37) in tRNA + dimethylallyl diphosphate = N(6)-dimethylallyladenosine(37) in tRNA + diphosphate. Functionally, catalyzes the transfer of a dimethylallyl group onto the adenine at position 37 in tRNAs that read codons beginning with uridine, leading to the formation of N6-(dimethylallyl)adenosine (i(6)A). The protein is tRNA dimethylallyltransferase of Borreliella burgdorferi (strain ZS7) (Borrelia burgdorferi).